The chain runs to 100 residues: MSEKRNIRDHKRRLLAAKYELRRKLYKAFCKDSDLPSDMRDKLRYKLSKLPRNSSFARVRNRCISTGRPRSVYELFRISRIVFRSLASRGPLMGIKKSSW.

Belongs to the universal ribosomal protein uS14 family.

It localises to the mitochondrion. This chain is Small ribosomal subunit protein uS14m (RPS14), found in Vicia faba (Broad bean).